The chain runs to 541 residues: MESQRNILLIGLLFVSFLLWQQWQADKAPKPVATESSLVANAANSHSADVPEADTGVPAAVTATSKLITVKTDQLDVQINPIGGDIVFAALVSHKMEQDKDQPFVLLEQTKDFTYIAQSGLIGRDGIDSSAKGRAAFSTAATEYTLAEGQDTLEVPLTYVADNGVTYTKVFVFHRGKFNVDVDYKINNTSAAPLQVQMYGQIKQTIKPSESSMVMPTYRGGAFSTQDVRYEKYKFDDMAKSNLNQATLGGWAAMLQHYFVSAWIPPATDSNTIFSSVSAGGLANIGFRGAVYDIAPGATQEISSQFYVGPKDQKALSAISDTLNLVVDYGFLWWLAVPIHWLLMFYQSFVGNWGLAIILITLTVRGLLFPLTKAQYTSMAKMRNLQPKLTDLKERFGDDRQKMGQAMMELYKKEKVNPMGGCLPIILQMPIFIALYWVLLESFELRHAPFMLWIHDLSVQDPYYILPLLMGVSMFVMQKMQPIAPTMDPMQVKMMQWMPVIFTVFFLWFPAGLVLYWLVGNIVAITQQKIIYAGLAKKGLK.

Helical transmembrane passes span 6 to 26, 325 to 345, 349 to 369, 420 to 440, 457 to 477, and 500 to 520; these read NILL…WQAD, LVVD…LLMF, FVGN…GLLF, GGCL…WVLL, LSVQ…MFVM, and VIFT…WLVG.

The protein belongs to the OXA1/ALB3/YidC family. Type 1 subfamily. Interacts with the Sec translocase complex via SecD. Specifically interacts with transmembrane segments of nascent integral membrane proteins during membrane integration.

It is found in the cell inner membrane. Its function is as follows. Required for the insertion and/or proper folding and/or complex formation of integral membrane proteins into the membrane. Involved in integration of membrane proteins that insert both dependently and independently of the Sec translocase complex, as well as at least some lipoproteins. Aids folding of multispanning membrane proteins. The sequence is that of Membrane protein insertase YidC from Shewanella baltica (strain OS195).